We begin with the raw amino-acid sequence, 170 residues long: Myosin regulatory light chain 1 (170 aa).

Residues 1 to 13 are compositionally biased toward basic residues; it reads MSKAAKKKSSKKR. A disordered region spans residues 1–22; that stretch reads MSKAAKKKSSKKRSGSEAAQFD. 2 consecutive EF-hand domains span residues 24 to 59 and 93 to 128; these read KTIQ…MGQI and DPEA…KRGE. Asp-37, Asn-39, Asp-41, and Asp-48 together coordinate Ca(2+).

In terms of assembly, myosin is a hexamer of 2 heavy chains and 4 light chains (two regulatory light chains and two essential light chains).

The protein is Myosin regulatory light chain 1 (mlc-1) of Caenorhabditis elegans.